Consider the following 512-residue polypeptide: Delta(14)-sterol reductase (512 aa).

8 consecutive transmembrane segments (helical) span residues 27 to 47 (IGAS…GFLC), 100 to 120 (AVLG…LLPA), 140 to 160 (ACLS…VRGP), 172 to 192 (YIQL…YVYL), 242 to 262 (SFME…AFAA), 278 to 298 (WTPL…VIIS), 324 to 344 (FGFM…SIQA), and 353 to 373 (ALGP…YYIF). NADP(+) is bound by residues Lys-380, Arg-384, Leu-407, Trp-412, and 419-420 (NY). 2 helical membrane passes run 418–438 (INYL…LAAG) and 458–478 (MKGA…ILLI). Residues Asp-484, 488-492 (CRRKY), and Tyr-499 each bind NADP(+).

This sequence belongs to the ERG4/ERG24 family.

The protein localises to the membrane. It catalyses the reaction 4,4-dimethyl-5alpha-cholesta-8,24-dien-3beta-ol + NADP(+) = 4,4-dimethyl-5alpha-cholesta-8,14,24-trien-3beta-ol + NADPH + H(+). The protein operates within steroid biosynthesis; zymosterol biosynthesis; zymosterol from lanosterol: step 2/6. Reduces the C14=C15 double bond of 4,4-dimethyl-cholesta-8,14,24-trienol to produce 4,4-dimethyl-cholesta-8,24-dienol. This is Delta(14)-sterol reductase (ERG3) from Septoria lycopersici (Tomato leaf spot fungus).